Consider the following 229-residue polypeptide: Heptahelical transmembrane protein ADIPOR2 (229 aa).

Topologically, residues 1 to 4 (MQGA) are cytoplasmic. The helical transmembrane segment at 5 to 25 (ASHDAAAAAAAAAVLGGGHGV) threads the bilayer. At 26-30 (PRWPR) the chain is on the extracellular side. Residues 31-51 (MVFLVGAMTCLAISATAHLLA) traverse the membrane as a helical segment. At 52 to 66 (CHSRRASVVFWQLDY) the chain is on the cytoplasmic side. The helical transmembrane segment at 67–87 (AGISAMIVASFVPPVYYAFLC) threads the bilayer. Residues 88–92 (HRPAR) lie on the Extracellular side of the membrane. The chain crosses the membrane as a helical span at residues 93-113 (VAYLSAISALGALVVGALLSP). The Cytoplasmic portion of the chain corresponds to 114-124 (PCSSPRFRRLR). Residues 125–145 (AALFLAMGLSGVVPALHALWL) traverse the membrane as a helical segment. The Extracellular portion of the chain corresponds to 146 to 153 (NWGHAACY). A helical transmembrane segment spans residues 154-174 (LALSLEVAMGLAYAAGAWFYV). Residues 175 to 194 (SRVPEKWRPGVFDVVGHSHQ) lie on the Cytoplasmic side of the membrane. The chain crosses the membrane as a helical span at residues 195–215 (IFHVLVLVGAVTHYVAVDVLL). At 216–229 (NWRETVAAACSATS) the chain is on the extracellular side.

The protein belongs to the ADIPOR family.

The protein localises to the membrane. Its function is as follows. May play a role in abiotic stress response. This is Heptahelical transmembrane protein ADIPOR2 (ADIPOR2) from Oryza sativa subsp. japonica (Rice).